The following is a 295-amino-acid chain: Ribosomal RNA small subunit methyltransferase A (295 aa).

Asn40, Val42, Gly67, Glu88, Asp118, and Asn135 together coordinate S-adenosyl-L-methionine.

Belongs to the class I-like SAM-binding methyltransferase superfamily. rRNA adenine N(6)-methyltransferase family. RsmA subfamily.

The protein localises to the cytoplasm. It catalyses the reaction adenosine(1518)/adenosine(1519) in 16S rRNA + 4 S-adenosyl-L-methionine = N(6)-dimethyladenosine(1518)/N(6)-dimethyladenosine(1519) in 16S rRNA + 4 S-adenosyl-L-homocysteine + 4 H(+). Functionally, specifically dimethylates two adjacent adenosines (A1518 and A1519) in the loop of a conserved hairpin near the 3'-end of 16S rRNA in the 30S particle. May play a critical role in biogenesis of 30S subunits. The protein is Ribosomal RNA small subunit methyltransferase A of Arthrobacter sp. (strain FB24).